Here is a 248-residue protein sequence, read N- to C-terminus: ATP synthase subunit a, chloroplastic (248 aa).

5 consecutive transmembrane segments (helical) span residues 38 to 58 (QVLI…AIAV), 96 to 116 (VPFI…GALL), 135 to 155 (INTT…AGLT), 200 to 220 (LVVV…VMFL), and 221 to 241 (GLFT…AYIG).

It belongs to the ATPase A chain family. As to quaternary structure, F-type ATPases have 2 components, CF(1) - the catalytic core - and CF(0) - the membrane proton channel. CF(1) has five subunits: alpha(3), beta(3), gamma(1), delta(1), epsilon(1). CF(0) has four main subunits: a, b, b' and c.

It is found in the plastid. It localises to the chloroplast thylakoid membrane. Its function is as follows. Key component of the proton channel; it plays a direct role in the translocation of protons across the membrane. The chain is ATP synthase subunit a, chloroplastic from Nuphar advena (Common spatterdock).